A 261-amino-acid polypeptide reads, in one-letter code: MAETRIHPSAVVDPAAQVGEGCEIGPFCVIGPEVGLGRGVVLKSHVVVAGETLIGDETVVFPFASLGEVPQDLKFRGERTRLEIGARNRIREYVTMNPGTEGGGGVTRIGDDGLFMAGSHVAHDCQIGNRVILVNNASVAGHCVLEDDVIVGGLSGVHQFVRIGRGAMIGAVTMVTADVIPFGLVQGPRGHLDGLNLVGLKRRGASREEIHALRDMLAQLGQGSFRDTARHLAEAENGPMVREVLDFILGPSDRSFLAPHP.

Belongs to the transferase hexapeptide repeat family. LpxA subfamily. Homotrimer.

It localises to the cytoplasm. The enzyme catalyses a (3R)-hydroxyacyl-[ACP] + UDP-N-acetyl-alpha-D-glucosamine = a UDP-3-O-[(3R)-3-hydroxyacyl]-N-acetyl-alpha-D-glucosamine + holo-[ACP]. It functions in the pathway glycolipid biosynthesis; lipid IV(A) biosynthesis; lipid IV(A) from (3R)-3-hydroxytetradecanoyl-[acyl-carrier-protein] and UDP-N-acetyl-alpha-D-glucosamine: step 1/6. Involved in the biosynthesis of lipid A, a phosphorylated glycolipid that anchors the lipopolysaccharide to the outer membrane of the cell. This Paracoccus denitrificans (strain Pd 1222) protein is Acyl-[acyl-carrier-protein]--UDP-N-acetylglucosamine O-acyltransferase.